Consider the following 371-residue polypeptide: Chitin deacetylase (371 aa).

The first 20 residues, 1–20, serve as a signal peptide directing secretion; that stretch reads MLCRLFTLFITAALACCVAA. Positions 73 to 112 are disordered; that stretch reads PKPEPEPTAVPTMAPEPTTVPPTEPSGTYPPETTPTVEPT. Low complexity-rich tracts occupy residues 79–89 and 102–112; these read PTAVPTMAPEP and PPETTPTVEPT. Cys-164 and Cys-358 are joined by a disulfide. Asn-167 carries N-linked (GlcNAc...) asparagine glycosylation. The NodB homology domain maps to 168-353; sequence GTIALTFDDG…EIKKRGLRAV (186 aa). The active-site Proton acceptor is the Asp-175. Asp-175 contacts acetate. Positions 176, 228, and 232 each coordinate Co(2+). Asn-239 is a glycosylation site (N-linked (GlcNAc...) asparagine). An acetate-binding site is contributed by Tyr-270. The active-site Proton donor is His-327.

This sequence belongs to the polysaccharide deacetylase family. Co(2+) serves as cofactor.

The enzyme catalyses [(1-&gt;4)-N-acetyl-beta-D-glucosaminyl](n) + n H2O = chitosan + n acetate. In terms of biological role, hydrolyzes the N-acetamido groups of N-acetyl-D-glucosamine residues in chitin to form chitosan and acetate. This is Chitin deacetylase from Arthroderma benhamiae (strain ATCC MYA-4681 / CBS 112371) (Trichophyton mentagrophytes).